Consider the following 421-residue polypeptide: Elsinochrome C biosynthesis regulatory protein elcR (421 aa).

Residues 1 to 16 (MATQLPSPTATTSHSG) are compositionally biased toward polar residues. Positions 1–20 (MATQLPSPTATTSHSGNEPR) are disordered. Positions 27–54 (CNNCSAQKIRCGKQRPACARCVNKKLQC) form a DNA-binding region, zn(2)-C6 fungal-type.

It is found in the nucleus. Its function is as follows. Transcription regulator of the gene cluster that mediates the biosynthesis of elsinochrome C, a perelyenequinone phytotoxin structurally similar to cercosporin. This Phaeosphaeria nodorum (strain SN15 / ATCC MYA-4574 / FGSC 10173) (Glume blotch fungus) protein is Elsinochrome C biosynthesis regulatory protein elcR.